Reading from the N-terminus, the 126-residue chain is Nuclear transport factor 2B (126 aa).

Ser-2 is subject to N-acetylserine. The region spanning 9–123 (VSKAFVEHYY…FYVFNDIFRL (115 aa)) is the NTF2 domain.

Interacts with RAN1. Expressed in roots, stems, leaves and flowers, and, at low levels, in siliques.

It is found in the cytoplasm. Its subcellular location is the nucleus. The protein resides in the nucleus envelope. Facilitates protein transport into the nucleus. Interacts with various nucleoporins and with Ran-GDP. Could be part of a multicomponent system of cytosolic factors that assemble at the pore complex during nuclear import. The polypeptide is Nuclear transport factor 2B (Arabidopsis thaliana (Mouse-ear cress)).